A 189-amino-acid chain; its full sequence is Peptidyl-tRNA hydrolase (189 aa).

Tyr-16 is a binding site for tRNA. The active-site Proton acceptor is His-21. Residues Phe-67, Asn-69, and Asn-115 each coordinate tRNA.

It belongs to the PTH family. As to quaternary structure, monomer.

The protein resides in the cytoplasm. The catalysed reaction is an N-acyl-L-alpha-aminoacyl-tRNA + H2O = an N-acyl-L-amino acid + a tRNA + H(+). Functionally, hydrolyzes ribosome-free peptidyl-tRNAs (with 1 or more amino acids incorporated), which drop off the ribosome during protein synthesis, or as a result of ribosome stalling. Its function is as follows. Catalyzes the release of premature peptidyl moieties from peptidyl-tRNA molecules trapped in stalled 50S ribosomal subunits, and thus maintains levels of free tRNAs and 50S ribosomes. The sequence is that of Peptidyl-tRNA hydrolase from Legionella pneumophila (strain Paris).